The following is a 633-amino-acid chain: GTPase-activating protein GYP3 (633 aa).

The tract at residues 26–127 (AFTVKSPSVP…HSDDLDLVPD (102 aa)) is disordered. Residues 37 to 47 (FHDKMHSDHSS) are compositionally biased toward basic and acidic residues. The span at 99-115 (GEDDDDNNGDNGNEDLE) shows a compositional bias: acidic residues. Serine 147 is subject to Phosphoserine. In terms of domain architecture, Rab-GAP TBC spans 223-456 (GIPAEWRGNA…RIWDCLFYEE (234 aa)). A Phosphoserine modification is found at serine 484.

The protein resides in the cytoplasm. It localises to the bud. It is found in the bud neck. Its function is as follows. Regulates exocytosis by functioning as a GAP for SEC4. Stimulates specifically the GTPase activity of YPT6. Also required for efficient polarization of the actin patches. In Saccharomyces cerevisiae (strain ATCC 204508 / S288c) (Baker's yeast), this protein is GTPase-activating protein GYP3 (MSB3).